Consider the following 719-residue polypeptide: Pesticidal crystal protein Cry1Ic (719 aa).

Belongs to the delta endotoxin family.

Functionally, promotes colloidosmotic lysis by binding to the midgut epithelial cells of insects. This Bacillus thuringiensis protein is Pesticidal crystal protein Cry1Ic (cry1Ic).